Here is a 255-residue protein sequence, read N- to C-terminus: Triosephosphate isomerase (255 aa).

9-11 (NWK) contributes to the substrate binding site. His95 (electrophile) is an active-site residue. Catalysis depends on Glu167, which acts as the Proton acceptor. Substrate contacts are provided by residues Gly173, Ser212, and 233–234 (GG).

Belongs to the triosephosphate isomerase family. In terms of assembly, homodimer.

The protein localises to the cytoplasm. It catalyses the reaction D-glyceraldehyde 3-phosphate = dihydroxyacetone phosphate. Its pathway is carbohydrate biosynthesis; gluconeogenesis. It participates in carbohydrate degradation; glycolysis; D-glyceraldehyde 3-phosphate from glycerone phosphate: step 1/1. In terms of biological role, involved in the gluconeogenesis. Catalyzes stereospecifically the conversion of dihydroxyacetone phosphate (DHAP) to D-glyceraldehyde-3-phosphate (G3P). The polypeptide is Triosephosphate isomerase (Erwinia tasmaniensis (strain DSM 17950 / CFBP 7177 / CIP 109463 / NCPPB 4357 / Et1/99)).